The chain runs to 300 residues: Putative glycosyltransferase ORF300 (300 aa).

Belongs to the glycosyltransferase group 1 family. Glycosyltransferase 4 subfamily.

The polypeptide is Putative glycosyltransferase ORF300 (Acidianus hospitalis (AFV-1)).